Reading from the N-terminus, the 936-residue chain is Probable outer membrane protein pmp7 (936 aa).

A signal peptide spans 1 to 23 (MKSSVSWLFFSSIPLFSSLSIVA). The Autotransporter domain maps to 636–936 (GEPFERELWL…NTNLGSKFCF (301 aa)).

This sequence belongs to the PMP outer membrane protein family.

It is found in the secreted. The protein localises to the cell wall. The protein resides in the cell outer membrane. This is Probable outer membrane protein pmp7 (pmp7) from Chlamydia pneumoniae (Chlamydophila pneumoniae).